Reading from the N-terminus, the 404-residue chain is MSDSKEPRLQQLDLLEEEQLGGVGFRQTRGYKSLAGCLGHGPLVLQLLSFTLLAGLLVQVSKVPSSLSQGQSKQDAIYQNLTQLKVAVSELSEKSKQQEIYQELTRLKAAVGELPEKSKQQEIYEELTRLKAAVGELPEKSKLQEIYQELTRLKAAVGELPEKSKMQEIYQELSRLKAAVGDLPEKSKQQEIYQELSRLKAAVGDLPEKSKQQEIYQKLTQLKAAVDGLPDRSKQQEIYQELIQLKAAVERLCHPCPWEWTFFQGNCYFMSNSQRNWHDSITACQEVGAQLVVIKSAEEQNFLQLQSSRSNRFTWMGLSDLNHEGTWQWVDGSPLLPSFKQYWNKGEPNNIGEEDCAEFSGNGWNDDKCNLAKFWICKKSAASCSGDEERLLSPAPTTPNPPPA.

Over 1–37 the chain is Cytoplasmic; the sequence is MSDSKEPRLQQLDLLEEEQLGGVGFRQTRGYKSLAGC. 3 consecutive short sequence motifs (endocytosis signal) follow at residues 14-15, 16-18, and 31-34; these read LL, EEE, and YKSL. A helical; Signal-anchor for type II membrane protein transmembrane segment spans residues 38–58; it reads LGHGPLVLQLLSFTLLAGLLV. The Extracellular portion of the chain corresponds to 59–404; it reads QVSKVPSSLS…APTTPNPPPA (346 aa). A glycan (N-linked (GlcNAc...) asparagine) is linked at N80. 7 consecutive repeat copies span residues 96–118, 119–141, 142–164, 165–187, 188–210, 211–233, and 234–257. The segment at 96-257 is 7 X approximate tandem repeats; that stretch reads KQQEIYQELT…AVERLCHPCP (162 aa). Cystine bridges form between C256–C267, C284–C377, and C356–C369. The region spanning 263-378 is the C-type lectin domain; sequence FQGNCYFMSN…CNLAKFWICK (116 aa). Ca(2+) contacts are provided by E347, N349, I351, E354, N365, and D366. The segment at 382 to 404 is disordered; the sequence is ASCSGDEERLLSPAPTTPNPPPA.

Homotetramer. Interacts with C1QBP; the interaction is indicative for a C1q:C1QBP:CD209 signaling complex. Interacts with ICAM2 and ICAM3 by binding to mannose-like carbohydrates. Interacts (via C-type lectin domain) with CEACAM1 (via Lewis X moieties); this interaction is regulated by the glycosylation pattern of CEACAM1 on cell types and regulates contact between dendritic cells and neutrophils.

It localises to the membrane. Functionally, pathogen-recognition receptor expressed on the surface of immature dendritic cells (DCs) and involved in initiation of primary immune response. Thought to mediate the endocytosis of pathogens which are subsequently degraded in lysosomal compartments. The receptor returns to the cell membrane surface and the pathogen-derived antigens are presented to resting T-cells via MHC class II proteins to initiate the adaptive immune response. Probably recognizes in a calcium-dependent manner high mannose N-linked oligosaccharides in a variety of pathogen antigens. In terms of biological role, on DCs it is a high affinity receptor for ICAM2 and ICAM3 by binding to mannose-like carbohydrates. May act as a DC rolling receptor that mediates transendothelial migration of DC presursors from blood to tissues by binding endothelial ICAM2. Seems to regulate DC-induced T-cell proliferation by binding to ICAM3 on T-cells in the immunological synapse formed between DC and T-cells. In Macaca mulatta (Rhesus macaque), this protein is CD209 antigen (CD209).